A 398-amino-acid chain; its full sequence is UDP-N-acetylglucosamine--N-acetylmuramyl-(pentapeptide) pyrophosphoryl-undecaprenol N-acetylglucosamine transferase (398 aa).

UDP-N-acetyl-alpha-D-glucosamine-binding positions include 15-17, asparagine 125, arginine 168, serine 196, and glutamine 297; that span reads TGG.

It belongs to the glycosyltransferase 28 family. MurG subfamily.

It is found in the cell inner membrane. The enzyme catalyses di-trans,octa-cis-undecaprenyl diphospho-N-acetyl-alpha-D-muramoyl-L-alanyl-D-glutamyl-meso-2,6-diaminopimeloyl-D-alanyl-D-alanine + UDP-N-acetyl-alpha-D-glucosamine = di-trans,octa-cis-undecaprenyl diphospho-[N-acetyl-alpha-D-glucosaminyl-(1-&gt;4)]-N-acetyl-alpha-D-muramoyl-L-alanyl-D-glutamyl-meso-2,6-diaminopimeloyl-D-alanyl-D-alanine + UDP + H(+). It functions in the pathway cell wall biogenesis; peptidoglycan biosynthesis. Its function is as follows. Cell wall formation. Catalyzes the transfer of a GlcNAc subunit on undecaprenyl-pyrophosphoryl-MurNAc-pentapeptide (lipid intermediate I) to form undecaprenyl-pyrophosphoryl-MurNAc-(pentapeptide)GlcNAc (lipid intermediate II). The protein is UDP-N-acetylglucosamine--N-acetylmuramyl-(pentapeptide) pyrophosphoryl-undecaprenol N-acetylglucosamine transferase of Erythrobacter litoralis (strain HTCC2594).